The following is a 378-amino-acid chain: Probable serine/threonine-protein kinase PBL7 (378 aa).

The interval 1–49 is disordered; that stretch reads MGWIPCSGKSSGRNKTRRNGDHKLDRKSSDCSVSTSEKSRAKSSLSESK. The N-myristoyl glycine moiety is linked to residue Gly-2. Residues 18–29 are compositionally biased toward basic and acidic residues; the sequence is RNGDHKLDRKSS. Residues 32–47 are compositionally biased toward low complexity; it reads SVSTSEKSRAKSSLSE. Phosphothreonine is present on Thr-62. The 278-residue stretch at 73–350 folds into the Protein kinase domain; sequence FRKECLIGEG…ADVVTALSYL (278 aa). Residues 79 to 87 and Lys-102 contribute to the ATP site; that span reads IGEGGFGRV. Tyr-147 carries the post-translational modification Phosphotyrosine. Catalysis depends on Asp-200, which acts as the Proton acceptor. Phosphoserine occurs at positions 204 and 234. Thr-235 and Thr-240 each carry phosphothreonine. Tyr-248 carries the phosphotyrosine modification.

Belongs to the protein kinase superfamily. Ser/Thr protein kinase family. As to quaternary structure, interacts with BSU1 and BSL1. Post-translationally, phosphorylated at Ser-43, Ser-46 and Ser-234. Widely expressed.

It localises to the cell membrane. It catalyses the reaction L-seryl-[protein] + ATP = O-phospho-L-seryl-[protein] + ADP + H(+). It carries out the reaction L-threonyl-[protein] + ATP = O-phospho-L-threonyl-[protein] + ADP + H(+). Functionally, serine/threonine-protein kinase involved in the positive regulation of brassinosteroid (BR) signaling and plant growth. Phosphorylates both BSU1 and BSL1 in vitro. The protein is Probable serine/threonine-protein kinase PBL7 of Arabidopsis thaliana (Mouse-ear cress).